The sequence spans 23 residues: Thylakoid lumenal 17.4 kDa protein (23 aa).

The interval 1-23 (ANQRLPPLSNDPDRCERAFVGNT) is disordered.

The protein localises to the plastid. It localises to the chloroplast thylakoid lumen. In Spinacia oleracea (Spinach), this protein is Thylakoid lumenal 17.4 kDa protein.